A 240-amino-acid polypeptide reads, in one-letter code: Fatty acid metabolism regulator protein (240 aa).

An HTH gntR-type domain is found at 6–74 (KGPASFAEKY…HGKPTRVNNF (69 aa)). Residues 34-53 (ERELSELIGVTRTTLREVLQ) constitute a DNA-binding region (H-T-H motif).

As to quaternary structure, homodimer.

It is found in the cytoplasm. Its function is as follows. Multifunctional regulator of fatty acid metabolism. This chain is Fatty acid metabolism regulator protein, found in Shewanella oneidensis (strain ATCC 700550 / JCM 31522 / CIP 106686 / LMG 19005 / NCIMB 14063 / MR-1).